The primary structure comprises 195 residues: MYVLFEGIDGVGKSTQIEILASKFSDAIVTKEPGGTQLGVNLREILLRSSIKIGKRAEILLFLADRAEHFEKLVAPNLGKLILSDRGFISGIAYALANDENLDENVLLELNKFALNDKFADKIIFFEASRELISSRLKARGTSDKIEARGLEYLLKVQSLMKQILIKNGFETLFIDASKSIELISKEIENFINFK.

7–14 provides a ligand contact to ATP; the sequence is GIDGVGKS.

The protein belongs to the thymidylate kinase family.

It catalyses the reaction dTMP + ATP = dTDP + ADP. Its function is as follows. Phosphorylation of dTMP to form dTDP in both de novo and salvage pathways of dTTP synthesis. The chain is Thymidylate kinase from Campylobacter concisus (strain 13826).